A 564-amino-acid polypeptide reads, in one-letter code: MFS-type efflux pump LUC4 (564 aa).

Residues 1–15 (MGQSQDNTQLTTASP) are compositionally biased toward polar residues. Positions 1–35 (MGQSQDNTQLTTASPQAEKDLSSNDNPPESEPAAP) are disordered. Helical transmembrane passes span 42–62 (WLVF…TSII), 78–98 (LYVW…PIFA), 108–128 (SLTL…GGAH), 141–161 (GVGG…MVSV), and 170–190 (IIGG…GAFA). The N-linked (GlcNAc...) asparagine glycan is linked to Asn-192. The next 3 helical transmembrane spans lie at 197–217 (WIFY…IVFL), 236–256 (WGGS…LSWG), and 268–288 (LVPL…QGAP). Residue Asn-302 is glycosylated (N-linked (GlcNAc...) asparagine). The next 5 helical transmembrane spans lie at 308 to 328 (LFVI…FLPV), 343 to 363 (VMLF…GIFI), 371 to 391 (VWHF…TLLD), 404 to 424 (LLFG…ILAS), and 436 to 456 (AWTF…AAAF). Asn-461 carries an N-linked (GlcNAc...) asparagine glycan. Residues 512-532 (KLVWQVSIAFSVLGFVLAFLV) form a helical membrane-spanning segment.

It belongs to the major facilitator superfamily. TCR/Tet family.

The protein resides in the membrane. Its function is as follows. MFS-type efflux pump; part of the gene cluster that mediates the biosynthesis of the mycotoxin lucilactaene and the lucilactaene-related compound NG-391 that act as cell cycle inhibitors with potent growth inhibitory activity against malarial parasites, moderate growth inhibitory activity against cancer cells, and no activity against bacteria and fungi. The chain is MFS-type efflux pump LUC4 from Fusarium sp.